A 360-amino-acid polypeptide reads, in one-letter code: Mannose-1-phosphate guanylyltransferase catalytic subunit beta (360 aa).

The tract at residues K2–P222 is substrate-binding domain. D110 is a GDP-alpha-D-mannose binding site. D110 contacts Mg(2+). K162 is a catalytic residue. Residue D218 coordinates GDP-alpha-D-mannose. D218 serves as a coordination point for Mg(2+). Positions C245 to M360 are hexapeptide repeat domain.

It belongs to the transferase hexapeptide repeat family. In terms of assembly, component of the GMPPA-GMPPB mannose-1-phosphate guanylyltransferase complex composed of 4 GMPPA subunits and 8 GMPPB subunits; the complex is organized into three layers, a central layer made up of 2 GMPPA dimers sandwiched between two layers each made up of 2 GMPPB dimers. GMPPB catalytic activity is reduced when part of the complex and binding of GDP-alpha-D-Mannose by GMPPA induces allosteric feedback inhibition of GMPPB. Requires Mg(2+) as cofactor. Ubiquitously expressed, including in brain and skeletal muscle. As to expression, weakly expressed with highest expression in skeletal muscle, brain and gonads.

It localises to the cytoplasm. The enzyme catalyses alpha-D-mannose 1-phosphate + GTP + H(+) = GDP-alpha-D-mannose + diphosphate. It functions in the pathway nucleotide-sugar biosynthesis; GDP-alpha-D-mannose biosynthesis; GDP-alpha-D-mannose from alpha-D-mannose 1-phosphate (GTP route): step 1/1. Its activity is regulated as follows. Enzyme activity is reduced by incorporation into the GMPPA-GMPPB mannose-1-phosphate guanylyltransferase complex. Allosterically inhibited, when part of the GMPPA-GMPPB complex, by GDP-alpha-D-mannose binding to GMPPA. Catalytic subunit of the GMPPA-GMPPB mannose-1-phosphate guanylyltransferase complex. Catalyzes the formation of GDP-mannose, an essential precursor of glycan moieties of glycoproteins and glycolipids. Can catalyze the reverse reaction in vitro. Together with GMPPA regulates GDP-alpha-D-mannose levels. The polypeptide is Mannose-1-phosphate guanylyltransferase catalytic subunit beta (Homo sapiens (Human)).